Consider the following 340-residue polypeptide: Biotin synthase (340 aa).

The segment at 1-21 (MDAASVSFGSGHDLSSQPRHD) is disordered. Positions 53–272 (NHVETANLLS…IAVARIMMPR (220 aa)) constitute a Radical SAM core domain. [4Fe-4S] cluster-binding residues include Cys68, Cys72, and Cys75. Residues Cys112, Cys143, Cys203, and Arg276 each coordinate [2Fe-2S] cluster.

This sequence belongs to the radical SAM superfamily. Biotin synthase family. As to quaternary structure, homodimer. Requires [4Fe-4S] cluster as cofactor. It depends on [2Fe-2S] cluster as a cofactor.

It carries out the reaction (4R,5S)-dethiobiotin + (sulfur carrier)-SH + 2 reduced [2Fe-2S]-[ferredoxin] + 2 S-adenosyl-L-methionine = (sulfur carrier)-H + biotin + 2 5'-deoxyadenosine + 2 L-methionine + 2 oxidized [2Fe-2S]-[ferredoxin]. It participates in cofactor biosynthesis; biotin biosynthesis; biotin from 7,8-diaminononanoate: step 2/2. Functionally, catalyzes the conversion of dethiobiotin (DTB) to biotin by the insertion of a sulfur atom into dethiobiotin via a radical-based mechanism. The chain is Biotin synthase from Nitrobacter hamburgensis (strain DSM 10229 / NCIMB 13809 / X14).